Here is a 227-residue protein sequence, read N- to C-terminus: MMVAHTAQQLDLREKLLTNGVHSLSDIELLAVFISSGNNKKSCLQLAYELTKHLGNLRNILNADLQSFKSIHGLGEVRYAQLQAAKEICHRSDFIHLQKEIRLSNTQQTYAFLKKRLRDYKNETFAALFLDNQHRIIAYEELFSGTINTATVYPRPIVERVLQLNAAALILAHNHPSGLSDASQQDLAITERIRDALDLVDARLLDHIVIGDNEVYSIFAENKWVCN.

Positions 102-225 (RLSNTQQTYA…YSIFAENKWV (124 aa)) constitute an MPN domain. Residues His173, His175, and Asp186 each coordinate Zn(2+). The JAMM motif signature appears at 173-186 (HNHPSGLSDASQQD).

Belongs to the UPF0758 family.

This Legionella pneumophila subsp. pneumophila (strain Philadelphia 1 / ATCC 33152 / DSM 7513) protein is UPF0758 protein lpg2489.